The sequence spans 339 residues: Annexin A2 (339 aa).

S2 bears the N-acetylserine mark. An S100A10-binding site region spans residues 2–24 (STVHEILCKLSLEGDHSTPPSAY). The residue at position 24 (Y24) is a Phosphotyrosine; by SRC. Position 26 is a phosphoserine; by PKC (S26). Annexin repeat units lie at residues 33 to 104 (FDAE…GLLK) and 105 to 176 (TPAQ…ALAK). K49 carries the N6-acetyllysine; alternate modification. Residue K49 forms a Glycyl lysine isopeptide (Lys-Gly) (interchain with G-Cter in SUMO1); alternate linkage. A Glycyl lysine isopeptide (Lys-Gly) (interchain with G-Cter in SUMO2); alternate cross-link involves residue K49. At K152 the chain carries N6-acetyllysine. A Phosphoserine modification is found at S184. Annexin repeat units follow at residues 189–261 (ELID…NLVQ) and 265–336 (NKPL…YLCG). The residue at position 199 (Y199) is a Phosphotyrosine. An N6-acetyllysine modification is found at K227.

This sequence belongs to the annexin family. In terms of assembly, heterotetramer containing 2 light chains of S100A10/p11 and 2 heavy chains of ANXA2/p36. Interacts with ATP1B1. Interacts with DYSF. Interacts with COCH. Interacts (via repeat Annexin 1) with PCSK9 (via the C-terminal domain); the interaction inhibits the degradation of LDLR. Interacts with CEACAM1 (via the cytoplasmic domain); this interaction is regulated by phosphorylation of CEACAM1. Interacts with APPL2 and APPL1; targets APPL2 to endosomes and acting in parallel to RAB5A. Interacts with S100A4. May interact with UBAP2. Interacts with PLEKHG4B; this interaction is required for PLEKHG4B localization to cell-cell adhesions. As to quaternary structure, (Microbial infection) Interacts with human cytomegalovirus (HCMV). (Microbial infection) Interacts with M.pneumoniae CARDS toxin; CARDS probably uses this protein as a receptor. A portion of internalized CARDS remains associated with intracellular annexin 2. In terms of processing, phosphorylation of Tyr-24 enhances heat stress-induced translocation to the cell surface. Post-translationally, ISGylated.

The protein localises to the secreted. It localises to the extracellular space. The protein resides in the extracellular matrix. It is found in the basement membrane. Its subcellular location is the melanosome. Functionally, calcium-regulated membrane-binding protein whose affinity for calcium is greatly enhanced by anionic phospholipids. It binds two calcium ions with high affinity. May be involved in heat-stress response. Inhibits PCSK9-enhanced LDLR degradation, probably reduces PCSK9 protein levels via a translational mechanism but also competes with LDLR for binding with PCSK9. Binds to endosomes damaged by phagocytosis of particulate wear debris and participates in endosomal membrane stabilization, thereby limiting NLRP3 inflammasome activation. Required for endothelial cell surface plasmin generation and may support fibrinolytic surveillance and neoangiogenesis. In terms of biological role, (Microbial infection) Binds M.pneumoniae CARDS toxin, probably serves as one receptor for this pathogen. When ANXA2 is down-regulated by siRNA, less toxin binds to human cells and less vacuolization (a symptom of M.pneumoniae infection) is seen. This Homo sapiens (Human) protein is Annexin A2 (ANXA2).